A 1015-amino-acid chain; its full sequence is Tolloid-like protein 2 (1015 aa).

The first 25 residues, 1–25 (MPRATALGALVSLLLLLPLPRGAGG), serve as a signal peptide directing secretion. 2 disordered regions span residues 24–49 (GGLGERPDATADYSELDGEEGTEQQL) and 88–130 (VGAT…TTLL). The propeptide occupies 26–149 (LGERPDATAD…AKTFSPRVRR (124 aa)). A compositionally biased stretch (polar residues) spans 103-113 (SESSPDTTAMD). Positions 115-125 (GTKEAGKDGRE) are enriched in basic and acidic residues. In terms of domain architecture, Peptidase M12A spans 149–349 (RATTSRTERI…AQARKLYKCP (201 aa)). N-linked (GlcNAc...) asparagine glycosylation occurs at Asn171. Intrachain disulfides connect Cys192-Cys348, Cys212-Cys234, Cys214-Cys215, and Cys351-Cys377. His242 contacts Zn(2+). Glu243 is an active-site residue. Residues His246 and His252 each coordinate Zn(2+). CUB domains are found at residues 351-463 (CGET…YEAT) and 464-576 (CGGD…FFKE). Residues Asn361 and Asn392 are each glycosylated (N-linked (GlcNAc...) asparagine). Intrachain disulfides connect Cys404/Cys426, Cys464/Cys490, Cys517/Cys539, Cys580/Cys592, Cys588/Cys601, Cys603/Cys616, Cys620/Cys646, Cys673/Cys695, Cys736/Cys747, Cys743/Cys756, Cys758/Cys771, and Cys776/Cys802. The 42-residue stretch at 576–617 (EVDECSWPDHGGCEHRCVNTLGSYKCACDPGYELAADKKMCE) folds into the EGF-like 1; calcium-binding domain. One can recognise a CUB 3 domain in the interval 620–732 (CGGFITKLNG…RGFRAHFFSD (113 aa)). Asn628 carries N-linked (GlcNAc...) asparagine glycosylation. One can recognise an EGF-like 2; calcium-binding domain in the interval 732–772 (DKDECAKDNGGCQHECVNTFGSYLCRCRNGYWLHENGHDCK). 2 CUB domains span residues 776–888 (CAHK…HSTE) and 889–1005 (CGGR…YTST). The N-linked (GlcNAc...) asparagine glycan is linked to Asn805. 3 disulfides stabilise this stretch: Cys829–Cys851, Cys889–Cys919, and Cys946–Cys968. An omega-N-methylarginine mark is found at Arg963 and Arg966.

The cofactor is Zn(2+).

It is found in the secreted. Protease which specifically processes pro-lysyl oxidase. Required for the embryonic development. Predominant protease, which in the development, influences dorsal-ventral patterning and skeletogenesis. The chain is Tolloid-like protein 2 (TLL2) from Homo sapiens (Human).